Here is a 160-residue protein sequence, read N- to C-terminus: Nucleotide-binding protein ASA_3207 (160 aa).

This sequence belongs to the YajQ family.

Nucleotide-binding protein. The polypeptide is Nucleotide-binding protein ASA_3207 (Aeromonas salmonicida (strain A449)).